A 631-amino-acid polypeptide reads, in one-letter code: Clathrin interactor 1 (631 aa).

Residues 24–157 (NVVMNYSEIE…QDDDRLREER (134 aa)) enclose the ENTH domain. Arginine 37 lines the a 1,2-diacyl-sn-glycero-3-phospho-(1D-myo-inositol-4,5-bisphosphate) pocket. The segment at 60–62 (FMY) is interaction with VTI1B. Residue arginine 75 participates in a 1,2-diacyl-sn-glycero-3-phospho-(1D-myo-inositol-4,5-bisphosphate) binding. Interaction with VTI1B regions lie at residues 102 to 104 (SER) and 150 to 161 (DDRLREERKKAK). A phosphoserine mark is found at serine 171, serine 174, serine 213, serine 218, serine 235, serine 253, and serine 307. A disordered region spans residues 227 to 339 (FRRKDREDSP…SSGDLVDLFD (113 aa)). Residues 230–247 (KDREDSPERCSDSDEEKK) are compositionally biased toward basic and acidic residues. The span at 308–318 (PDQNASTHTPQ) shows a compositional bias: polar residues. Threonine 316 is subject to Phosphothreonine. Over residues 319-331 (SSAKPSVPSSKSS) the composition is skewed to low complexity. Serine 320 and serine 630 each carry phosphoserine.

Belongs to the epsin family. As to quaternary structure, binds clathrin heavy chain and AP-2. Interacts with VTI1B. Interacts with GGA2 (via GAE domain). Interacts with AP1G1 (via GAE domain). Interacts with AP1G2 (via GAE domain).

Its subcellular location is the cytoplasm. The protein resides in the perinuclear region. The protein localises to the membrane. It localises to the cytoplasmic vesicle. It is found in the clathrin-coated vesicle. Its function is as follows. Binds to membranes enriched in phosphatidylinositol 4,5-bisphosphate (PtdIns(4,5)P2). May have a role in transport via clathrin-coated vesicles from the trans-Golgi network to endosomes. Stimulates clathrin assembly. In Mus musculus (Mouse), this protein is Clathrin interactor 1 (Clint1).